Here is a 320-residue protein sequence, read N- to C-terminus: Ferrochelatase (320 aa).

2 residues coordinate Fe cation: His194 and Glu275.

Belongs to the ferrochelatase family.

It is found in the cytoplasm. The catalysed reaction is heme b + 2 H(+) = protoporphyrin IX + Fe(2+). It participates in porphyrin-containing compound metabolism; protoheme biosynthesis; protoheme from protoporphyrin-IX: step 1/1. Functionally, catalyzes the ferrous insertion into protoporphyrin IX. This chain is Ferrochelatase, found in Enterobacter sp. (strain 638).